Here is a 356-residue protein sequence, read N- to C-terminus: uncharacterized protein (356 aa).

6 consecutive transmembrane segments (helical) span residues F2 to L22, E35 to F55, N76 to G96, I99 to L119, I124 to L144, and V151 to F171. A GGDEF domain is found at Q218–I353.

Its subcellular location is the cell membrane. This is an uncharacterized protein from Staphylococcus epidermidis (strain ATCC 35984 / DSM 28319 / BCRC 17069 / CCUG 31568 / BM 3577 / RP62A).